We begin with the raw amino-acid sequence, 454 residues long: Adenosylmethionine-8-amino-7-oxononanoate aminotransferase (454 aa).

119 to 120 contributes to the pyridoxal 5'-phosphate binding site; it reads GA. A substrate-binding site is contributed by tyrosine 152. Aspartate 257 contributes to the pyridoxal 5'-phosphate binding site. Positions 286, 321, and 416 each coordinate substrate. Lysine 286 carries the N6-(pyridoxal phosphate)lysine modification.

This sequence belongs to the class-III pyridoxal-phosphate-dependent aminotransferase family. BioA subfamily. As to quaternary structure, homodimer. Pyridoxal 5'-phosphate serves as cofactor.

The protein localises to the cytoplasm. The catalysed reaction is (8S)-8-amino-7-oxononanoate + S-adenosyl-L-methionine = S-adenosyl-4-methylsulfanyl-2-oxobutanoate + (7R,8S)-7,8-diammoniononanoate. It participates in cofactor biosynthesis; biotin biosynthesis; 7,8-diaminononanoate from 8-amino-7-oxononanoate (SAM route): step 1/1. Its function is as follows. Catalyzes the transfer of the alpha-amino group from S-adenosyl-L-methionine (SAM) to 7-keto-8-aminopelargonic acid (KAPA) to form 7,8-diaminopelargonic acid (DAPA). It is the only aminotransferase known to utilize SAM as an amino donor. This chain is Adenosylmethionine-8-amino-7-oxononanoate aminotransferase, found in Anoxybacillus flavithermus (strain DSM 21510 / WK1).